The primary structure comprises 337 residues: Nicotinate-nucleotide--dimethylbenzimidazole phosphoribosyltransferase (337 aa).

Glutamate 305 serves as the catalytic Proton acceptor.

This sequence belongs to the CobT family.

The enzyme catalyses 5,6-dimethylbenzimidazole + nicotinate beta-D-ribonucleotide = alpha-ribazole 5'-phosphate + nicotinate + H(+). Its pathway is nucleoside biosynthesis; alpha-ribazole biosynthesis; alpha-ribazole from 5,6-dimethylbenzimidazole: step 1/2. In terms of biological role, catalyzes the synthesis of alpha-ribazole-5'-phosphate from nicotinate mononucleotide (NAMN) and 5,6-dimethylbenzimidazole (DMB). In Roseobacter denitrificans (strain ATCC 33942 / OCh 114) (Erythrobacter sp. (strain OCh 114)), this protein is Nicotinate-nucleotide--dimethylbenzimidazole phosphoribosyltransferase.